A 260-amino-acid chain; its full sequence is Phosphoribosylaminoimidazole-succinocarboxamide synthase (260 aa).

This sequence belongs to the SAICAR synthetase family.

It catalyses the reaction 5-amino-1-(5-phospho-D-ribosyl)imidazole-4-carboxylate + L-aspartate + ATP = (2S)-2-[5-amino-1-(5-phospho-beta-D-ribosyl)imidazole-4-carboxamido]succinate + ADP + phosphate + 2 H(+). The protein operates within purine metabolism; IMP biosynthesis via de novo pathway; 5-amino-1-(5-phospho-D-ribosyl)imidazole-4-carboxamide from 5-amino-1-(5-phospho-D-ribosyl)imidazole-4-carboxylate: step 1/2. The sequence is that of Phosphoribosylaminoimidazole-succinocarboxamide synthase from Pelagibacter ubique (strain HTCC1062).